A 67-amino-acid polypeptide reads, in one-letter code: SPbeta prophage-derived uncharacterized protein YoqF (67 aa).

This chain is SPbeta prophage-derived uncharacterized protein YoqF (yoqF), found in Bacillus subtilis (strain 168).